A 388-amino-acid chain; its full sequence is LL-diaminopimelate aminotransferase (388 aa).

5 residues coordinate substrate: tyrosine 13, glycine 38, lysine 102, tyrosine 126, and asparagine 176. Pyridoxal 5'-phosphate is bound by residues 101-102 (SK), tyrosine 126, asparagine 176, tyrosine 207, and 235-237 (SLS). Lysine 238 is subject to N6-(pyridoxal phosphate)lysine. Arginine 246 serves as a coordination point for pyridoxal 5'-phosphate. A substrate-binding site is contributed by arginine 364.

It belongs to the class-I pyridoxal-phosphate-dependent aminotransferase family. LL-diaminopimelate aminotransferase subfamily. In terms of assembly, homodimer. Pyridoxal 5'-phosphate is required as a cofactor.

The catalysed reaction is (2S,6S)-2,6-diaminopimelate + 2-oxoglutarate = (S)-2,3,4,5-tetrahydrodipicolinate + L-glutamate + H2O + H(+). It functions in the pathway amino-acid biosynthesis; L-lysine biosynthesis via DAP pathway; LL-2,6-diaminopimelate from (S)-tetrahydrodipicolinate (aminotransferase route): step 1/1. Its function is as follows. Involved in the synthesis of meso-diaminopimelate (m-DAP or DL-DAP), required for both lysine and peptidoglycan biosynthesis. Catalyzes the direct conversion of tetrahydrodipicolinate to LL-diaminopimelate. In Dehalococcoides mccartyi (strain ATCC BAA-2100 / JCM 16839 / KCTC 5957 / BAV1), this protein is LL-diaminopimelate aminotransferase.